The chain runs to 257 residues: Pyridoxal phosphate homeostasis protein (257 aa).

The residue at position 47 (K47) is an N6-(pyridoxal phosphate)lysine.

The protein belongs to the pyridoxal phosphate-binding protein YggS/PROSC family.

In terms of biological role, pyridoxal 5'-phosphate (PLP)-binding protein, which is involved in PLP homeostasis. This is Pyridoxal phosphate homeostasis protein from Mycobacterium leprae (strain TN).